A 606-amino-acid chain; its full sequence is Urocanate reductase (606 aa).

The tat-type signal signal peptide spans Met-1–Ala-40. Thr-111 carries the post-translational modification FMN phosphoryl threonine. FAD is bound by residues Ala-163, Glu-182, Thr-191, Gly-195, Gly-196, Ala-197, Ala-305, and Asp-373. Residue Arg-433 is the Proton donor of the active site. FAD contacts are provided by Glu-572 and Ile-588.

Belongs to the FAD-dependent oxidoreductase 2 family. FRD/SDH subfamily. It depends on FAD as a cofactor. The cofactor is FMN. In terms of processing, predicted to be exported by the Tat system. The position of the signal peptide cleavage has not been experimentally proven.

It carries out the reaction dihydrourocanate + A = urocanate + AH2. Catalyzes the two-electron reduction of urocanate to dihydrourocanate (also named imidazole propionate or deamino-histidine). Dihydrourocanate is present at higher concentrations in subjects with type 2 diabetes, and directly impairs glucose tolerance and insulin signaling at the level of insulin receptor substrate (IRS) through activation of p38 gamma (MAPK12)-p62-mTORC1. Therefore, the UrdA enzyme from the gut bacteria E.lenta strain DSM 2243 may contribute to the pathogenesis of type 2 diabetes by producing the microbial metabolite dihydrourocanate. The protein is Urocanate reductase of Eggerthella lenta (strain ATCC 25559 / DSM 2243 / CCUG 17323 / JCM 9979 / KCTC 3265 / NCTC 11813 / VPI 0255 / 1899 B) (Eubacterium lentum).